A 701-amino-acid chain; its full sequence is MPSKQIRKQSISVTRGARRRDEDSGTDVGEGTDEWSQSKATVRPPDQLELTDAELKEEFTRILTANNPHAPQNIVRYSFKEGTYKLIGFVNQMAVHFSQVGNLIPKDSDEGRRQHYRDEMVAGSQESIKVVTSEAENLEEEEEPKEGEGEAEAEAEAGSQTDIPAAAETTEKVIEEELMAPVQPKERKLTNQFNFSERASQTFNNPLRDRECQMEPPPRTNFSATANQWEIYDAYVDELEKQEKTKEKEKAKTPVAKKTEKMAMRKLTSMESQSDDITKVTQAAKIVERMVNQNTYDDVAQDFKYYEDTADEYRDQEGTLLPLWKFQNDKAKRLAVTALCWNPKYKDLFAVGHGSYDFMKQSRGMLLLYSMKNPSFPEYMFSSESGIMCLDVHVDHPYLVVVGYYDGNVAIYNLKKPHSQPCFRSTSKSGKHTDPVWQVKWQKDDMDHNLNFFSVSSDGRIVSWTLVKSELVHIDIIKLKTEGSTTEIPEGLQLHTVGCGTAFDFHKEIDYMFLVGTEEGKIYKCSKSYSSQFLDTYDAHNMAVDAVLWNPYHTKVFMSCSSDWTVKIWDHTIKTPMFIYDLNSAVGDVAWAPYSSTVFAAVTTDGKAHVFDLAVNKYEAICNQPVVAKKKNKITHVQFNPIHPIIIVGDDRGHIICLKLSPNLRKMPKEKKGQEVQKGPAVEIAKLDKLLNLVREVKTKT.

Disordered stretches follow at residues 1-45 (MPSK…VRPP) and 119-165 (EMVA…DIPA). Residues S124 and S127 each carry the phosphoserine modification. The span at 136–155 (ENLEEEEEPKEGEGEAEAEA) shows a compositional bias: acidic residues. WD repeat units follow at residues 382–422 (SSES…SQPC), 431–474 (KHTD…LVHI), 539–579 (AHNM…PMFI), 581–621 (DLNS…YEAI), and 629–668 (KKKNKITHVQFNPIHPIIIVGDDRGHIICLKLSPNLRKMP).

Belongs to the dynein intermediate chain family. As to quaternary structure, consists of at least two heavy chains and a number of intermediate and light chains. Interacts with BICD2. Interacts with CFAP45 and CFAP52. Interacts with CFAP53.

The protein resides in the cytoplasm. Its subcellular location is the cytoskeleton. The protein localises to the cilium axoneme. In terms of biological role, part of the dynein complex of respiratory cilia. The protein is Dynein axonemal intermediate chain 1 (Dnai1) of Mus musculus (Mouse).